A 917-amino-acid polypeptide reads, in one-letter code: Major intrinsically disordered Notch2-binding receptor 1 (917 aa).

Topologically, residues 1–892 (MEANQEASLF…AEFRRAKVCK (892 aa)) are cytoplasmic. Disordered regions lie at residues 337 to 367 (STYFGPTPVMGTQDTRRCPGRPSKQTPWPAK), 389 to 410 (SEEKLRYPNSGNQTPNFSGPDR), 457 to 476 (DKSISCTSGQHSSDTSSVGT), 568 to 588 (ITNGVSGSKGDKCNRPENVHH), 652 to 679 (SEAPSDDSASPRVFHAHSGSHGPKLENS), 706 to 727 (TRPSSRSLTEENSATESKIASI), and 746 to 783 (NEEEIKDAGPANNKDWHRKSKEADRQYDIPPQHRLPKQ). A compositionally biased stretch (polar residues) spans 460-476 (ISCTSGQHSSDTSSVGT). The span at 576 to 588 (KGDKCNRPENVHH) shows a compositional bias: basic and acidic residues. Serine 712 bears the Phosphoserine mark. Residues 893–913 (IAALITAAACTVILVIVVPIC) traverse the membrane as a helical segment. Residues 914-917 (TMKS) lie on the Extracellular side of the membrane.

It belongs to the MINAR family. Interacts with NOTCH2; this interaction increases MINAR1 stability. Interacts (via N-terminus) with DEPTOR (via PDZ domain); this interaction may stabilize DEPTOR protein by impairing its ubiquitination.

The protein resides in the cell membrane. Functionally, intrinsically disordered protein which may negatively regulate mTOR signaling pathway by stabilizing the mTOR complex component DEPTOR. Negatively regulates angiogenesis. Negatively regulates cell growth. Negatively regulates neurite outgrowth in hippocampal neurons. This is Major intrinsically disordered Notch2-binding receptor 1 (Minar1) from Rattus norvegicus (Rat).